A 101-amino-acid chain; its full sequence is Small ribosomal subunit protein uS14 (101 aa).

It belongs to the universal ribosomal protein uS14 family. In terms of assembly, part of the 30S ribosomal subunit. Contacts proteins S3 and S10.

Functionally, binds 16S rRNA, required for the assembly of 30S particles and may also be responsible for determining the conformation of the 16S rRNA at the A site. This Ehrlichia chaffeensis (strain ATCC CRL-10679 / Arkansas) protein is Small ribosomal subunit protein uS14.